The following is a 64-amino-acid chain: Large ribosomal subunit protein bL35 (64 aa).

The protein belongs to the bacterial ribosomal protein bL35 family.

This chain is Large ribosomal subunit protein bL35, found in Leifsonia xyli subsp. xyli (strain CTCB07).